The primary structure comprises 875 residues: Leucine--tRNA ligase (875 aa).

The span at 1 to 20 (MPSAGSVNAANPAVDTSAQT) shows a compositional bias: polar residues. A disordered region spans residues 1–22 (MPSAGSVNAANPAVDTSAQTGR). Positions 60–70 (PYPSGSLHMGH) match the 'HIGH' region motif. Positions 634–638 (KMSKS) match the 'KMSKS' region motif. Lysine 637 is an ATP binding site.

Belongs to the class-I aminoacyl-tRNA synthetase family.

It is found in the cytoplasm. The catalysed reaction is tRNA(Leu) + L-leucine + ATP = L-leucyl-tRNA(Leu) + AMP + diphosphate. The protein is Leucine--tRNA ligase of Synechococcus sp. (strain CC9605).